We begin with the raw amino-acid sequence, 70 residues long: MPLIQVTLIEGRTMEAKAALIGSLTQAAVATLGAPRESVRVIIQEVPAAHWGVAGVPKSAAKEPPRDSKA.

Proline 2 (proton acceptor; via imino nitrogen) is an active-site residue.

The protein belongs to the 4-oxalocrotonate tautomerase family.

The protein is Probable tautomerase RSp0893 of Ralstonia nicotianae (strain ATCC BAA-1114 / GMI1000) (Ralstonia solanacearum).